Reading from the N-terminus, the 517-residue chain is Serine O-succinyltransferase (517 aa).

A mitochondrion-targeting transit peptide spans 1-46 (MSPLNGVARSFPRPFQAVTRRPFRVVQPAIACPSNSRSFNHSRSLR). Residues 36 to 64 (SRSFNHSRSLRSTGSQSPAPSPRDSSNPA) show a composition bias toward polar residues. The disordered stretch occupies residues 36–66 (SRSFNHSRSLRSTGSQSPAPSPRDSSNPALS). One can recognise an AB hydrolase-1 domain in the interval 134 to 386 (NVILLHTGLS…LTQQLATKKQ (253 aa)). Residues 141 to 144 (GLSA) form an important for substrate specificity region. The active-site Nucleophile is S238. A substrate-binding site is contributed by R307. Residues 413 to 436 (QPYQEQPSASTSAEQSASASETGS) form a disordered region. Over residues 416 to 436 (QEQPSASTSAEQSASASETGS) the composition is skewed to low complexity. Active-site residues include D461 and H498. A substrate-binding site is contributed by D499.

It belongs to the AB hydrolase superfamily. MetX family.

The protein resides in the mitochondrion. It carries out the reaction succinyl-CoA + L-serine = O-succinyl-L-serine + CoA. The protein operates within amino-acid biosynthesis; L-cysteine biosynthesis; L-cysteine from L-serine: step 1/2. Transfers a succinyl group from succinyl-CoA to L-serine, forming succinyl-L-serine. Also has weak serine acetyl transferase activity and homoserine succinyl transferase activity. This Emericella nidulans (strain FGSC A4 / ATCC 38163 / CBS 112.46 / NRRL 194 / M139) (Aspergillus nidulans) protein is Serine O-succinyltransferase.